A 270-amino-acid polypeptide reads, in one-letter code: Plasmanylethanolamine desaturase 1 (270 aa).

Helical transmembrane passes span 47–67 (WCSVILCFSLIAHNLVHLLLL), 74–94 (PLVILGVVAGALIADFLSGLV), and 161–181 (ALEQLYPWECFVFCLIIFGTF). Residues 186–190 (HKWSH) carry the Histidine box-1 motif. Positions 213–217 (HHRIH) match the Histidine box-2 motif.

It belongs to the fatty acid desaturase CarF family.

The protein localises to the endoplasmic reticulum membrane. It catalyses the reaction a 1-(1,2-saturated alkyl)-2-acyl-sn-glycero-3-phosphoethanolamine + 2 Fe(II)-[cytochrome b5] + O2 + 2 H(+) = a 1-O-(1Z-alkenyl)-2-acyl-sn-glycero-3-phosphoethanolamine + 2 Fe(III)-[cytochrome b5] + 2 H2O. It carries out the reaction a 1-O-hexadecyl-2-acyl-sn-glycero-3-phosphoethanolamine + 2 Fe(II)-[cytochrome b5] + O2 + 2 H(+) = a 1-O-(1Z-hexadecenyl)-2-acyl-sn-glycero-3-phosphoethanolamine + 2 Fe(III)-[cytochrome b5] + 2 H2O. The catalysed reaction is a 1-O-octadecyl-2-acyl-sn-glycero-3-phosphoethanolamine + 2 Fe(II)-[cytochrome b5] + O2 + 2 H(+) = a 1-O-(1Z-octadecenyl)-2-acyl-sn-glycero-3-phosphoethanolamine + 2 Fe(III)-[cytochrome b5] + 2 H2O. The enzyme catalyses a 1-O-(9Z-octadecenyl)-2-acyl-sn-glycero-3-phosphoethanolamine + 2 Fe(II)-[cytochrome b5] + O2 + 2 H(+) = a 1-O-(1Z,9Z-octadecadienyl)-2-acyl-sn-glycero-3-phosphoethanolamine + 2 Fe(III)-[cytochrome b5] + 2 H2O. The protein operates within lipid metabolism; fatty acid metabolism. Plasmanylethanolamine desaturase involved in plasmalogen biogenesis in the endoplasmic reticulum membrane. Plasmalogens are glycerophospholipids with a hydrocarbon chain linked by a vinyl ether bond at the glycerol sn-1 position, and are involved in antioxidative and signaling mechanisms. This is Plasmanylethanolamine desaturase 1 from Homo sapiens (Human).